We begin with the raw amino-acid sequence, 289 residues long: Protoheme IX farnesyltransferase (289 aa).

A run of 9 helical transmembrane segments spans residues 13–33, 40–60, 85–105, 111–131, 139–159, 168–188, 212–232, 234–254, and 269–289; these read LIKPRVTSLVLATIIPGLYLA, VFLITVTLFGTFLMSSASFIF, ISIPQATLVGISMMGLSFYML, LLTALCALTALISYVFLYTIF, NIVIGGVAGCVGPLIGYAAIG, ILFTMIFLWTPAHFWALAIFL, SIFFYTILYSLSCVSFYFLEP, MGLLYLVIVLLVCIWMGILSY, and FLFSIFHLFLINITIVVDHMI.

Belongs to the UbiA prenyltransferase family. Protoheme IX farnesyltransferase subfamily.

It localises to the cell inner membrane. It carries out the reaction heme b + (2E,6E)-farnesyl diphosphate + H2O = Fe(II)-heme o + diphosphate. It functions in the pathway porphyrin-containing compound metabolism; heme O biosynthesis; heme O from protoheme: step 1/1. Converts heme B (protoheme IX) to heme O by substitution of the vinyl group on carbon 2 of heme B porphyrin ring with a hydroxyethyl farnesyl side group. This is Protoheme IX farnesyltransferase from Leptospira borgpetersenii serovar Hardjo-bovis (strain JB197).